A 407-amino-acid polypeptide reads, in one-letter code: Na(+)-translocating NADH-quinone reductase subunit F (407 aa).

A helical transmembrane segment spans residues 3-23; it reads IILGVVMFTLIVLALVLVILF. Residues 32-126 form the 2Fe-2S ferredoxin-type domain; that stretch reads GDITISINGD…DMDIELPEEI (95 aa). The [2Fe-2S] cluster site is built by Cys-69, Cys-75, Cys-78, and Cys-110. In terms of domain architecture, FAD-binding FR-type spans 129–269; it reads VKKWECTVIS…SGPFGEFFAK (141 aa). A catalytic region spans residues 272–389; that stretch reads DAEMVFIGGG…PMMNAAVIGM (118 aa).

Belongs to the NqrF family. In terms of assembly, composed of six subunits; NqrA, NqrB, NqrC, NqrD, NqrE and NqrF. The cofactor is [2Fe-2S] cluster. FAD is required as a cofactor.

It localises to the cell inner membrane. It catalyses the reaction a ubiquinone + n Na(+)(in) + NADH + H(+) = a ubiquinol + n Na(+)(out) + NAD(+). Functionally, NQR complex catalyzes the reduction of ubiquinone-1 to ubiquinol by two successive reactions, coupled with the transport of Na(+) ions from the cytoplasm to the periplasm. The first step is catalyzed by NqrF, which accepts electrons from NADH and reduces ubiquinone-1 to ubisemiquinone by a one-electron transfer pathway. The polypeptide is Na(+)-translocating NADH-quinone reductase subunit F (Vibrio vulnificus (strain CMCP6)).